Here is a 423-residue protein sequence, read N- to C-terminus: Lysosomal acid phosphatase (423 aa).

The first 30 residues, 1–30, serve as a signal peptide directing secretion; the sequence is MAGRRFGWSRAALLQLILGVNLMVMPRTQA. At 31-380 the chain is on the lumenal side; that stretch reads RTLRFVTLLY…QLAGGPADTE (350 aa). His-42 serves as the catalytic Nucleophile. N-linked (GlcNAc...) asparagine glycans are attached at residues Asn-92, Asn-133, Asn-167, Asn-177, Asn-191, and Asn-267. Intrachain disulfides connect Cys-159-Cys-370, Cys-212-Cys-310, and Cys-345-Cys-349. Asp-287 (proton donor) is an active-site residue. 2 N-linked (GlcNAc...) asparagine glycosylation sites follow: Asn-322 and Asn-331. Residues 381-401 form a helical membrane-spanning segment; sequence VIVALAVCGSILFLLIVLLLT. Over 402–423 the chain is Cytoplasmic; that stretch reads VLFRVQAQPPGYRHVPDGEDHA.

This sequence belongs to the histidine acid phosphatase family. In terms of processing, the membrane-bound form is converted to the soluble form by sequential proteolytic processing. First, the C-terminal cytoplasmic tail is removed. Cleavage by a lysosomal protease releases the soluble form in the lysosome lumen.

It is found in the lysosome membrane. The protein localises to the lysosome lumen. It carries out the reaction a phosphate monoester + H2O = an alcohol + phosphate. The sequence is that of Lysosomal acid phosphatase (ACP2) from Bos taurus (Bovine).